The primary structure comprises 516 residues: ADP-ribosylation factor GTPase-activating protein 3 (516 aa).

One can recognise an Arf-GAP domain in the interval 10–126 (LTIFKRLRSV…IKSLASQATR (117 aa)). A C4-type zinc finger spans residues 25–48 (CFDCGAKNPSWASITYGVFLCIDC). Residues 170 to 199 (AEPSSLTSRPAETTLENNEGGQEQGPCVEG) form a disordered region. A compositionally biased stretch (polar residues) spans 173–190 (SSLTSRPAETTLENNEGG). Phosphoserine is present on S231. Residues 243 to 264 (NEIEKQAQAADKMKEQEDLAKA) adopt a coiled-coil conformation. 4 positions are modified to phosphoserine: S270, S274, S331, and S370. The interval 393-417 (TTGYSDRPTARHKPDYEPVENTDEA) is disordered. S428, S451, S453, S455, S457, and S458 each carry phosphoserine.

It is found in the cytoplasm. Its subcellular location is the golgi apparatus membrane. Its activity is regulated as follows. GAP activity stimulated by phosphatidylinositol 4,5-bisphosphate (PIP2). Functionally, GTPase-activating protein (GAP) for ADP ribosylation factor 1 (ARF1). Hydrolysis of ARF1-bound GTP may lead to dissociation of coatomer from Golgi-derived membranes to allow fusion with target membranes. The chain is ADP-ribosylation factor GTPase-activating protein 3 from Pongo abelii (Sumatran orangutan).